The sequence spans 194 residues: MTDTWLIVGLGNPGTEYSNNRHNVGQMVLDELARRVGGSFKVHKARAHVLEGRLGIGGPRVVLAKPMSYMNVSGGPVSALSKFYDIDPEHVVAVHDEIDIPFNTVKLKIGGGEGGHNGLRDISKALATKDYLRVRVGVGRPPGRMDTADFVLKDFATTEKKDLPFLLDDAADAVETVVREGLAAAQQKYHTAVQ.

Tyr17 is a binding site for tRNA. His22 serves as the catalytic Proton acceptor. Positions 69, 71, and 117 each coordinate tRNA.

It belongs to the PTH family. In terms of assembly, monomer.

The protein localises to the cytoplasm. It carries out the reaction an N-acyl-L-alpha-aminoacyl-tRNA + H2O = an N-acyl-L-amino acid + a tRNA + H(+). Its function is as follows. Hydrolyzes ribosome-free peptidyl-tRNAs (with 1 or more amino acids incorporated), which drop off the ribosome during protein synthesis, or as a result of ribosome stalling. Catalyzes the release of premature peptidyl moieties from peptidyl-tRNA molecules trapped in stalled 50S ribosomal subunits, and thus maintains levels of free tRNAs and 50S ribosomes. The sequence is that of Peptidyl-tRNA hydrolase from Arthrobacter sp. (strain FB24).